We begin with the raw amino-acid sequence, 153 residues long: T cell receptor delta constant (153 aa).

Asn-14 carries N-linked (GlcNAc...) asparagine glycosylation. Cys-20 and Cys-71 form a disulfide bridge. The N-linked (GlcNAc...) asparagine glycan is linked to Asn-77. Positions 85–102 (FEVKTDSTDHVKPKETEN) are enriched in basic and acidic residues. The disordered stretch occupies residues 85-112 (FEVKTDSTDHVKPKETENTKQPSKSCHK). A helical transmembrane segment spans residues 130 to 152 (LGLRMLFAKTVAVNFLLTAKLFF).

As to quaternary structure, gamma-delta TR is a heterodimer composed of a gamma and delta chain; disulfide-linked. The gamma-delta TR is associated with the transmembrane signaling CD3 coreceptor proteins following the stoichiometry: a single gamma-delta TR heterodimer associates with one CD3D-CD3E heterodimer, one CD3G-CD3E heterodimer and one CD247 homodimer forming a stable octameric structure. Upon activation, gamma-delta TR complex associates with FCER1G to initiate intracellular signaling.

The protein localises to the cell membrane. Constant region of T cell receptor (TR) delta chain that participates in the antigen recognition. Gamma-delta TRs recognize a variety of self and foreign non-peptide antigens frequently expressed at the epithelial boundaries between the host and external environment, including endogenous lipids presented by MH-like protein CD1D and phosphoantigens presented by butyrophilin-like molecule BTN3A1. Upon antigen recognition induces rapid, innate-like immune responses involved in pathogen clearance and tissue repair. Binding of gamma-delta TR complex to antigen triggers phosphorylation of immunoreceptor tyrosine-based activation motifs (ITAMs) in the CD3 chains by the LCK and FYN kinases, allowing the recruitment, phosphorylation, and activation of ZAP70 that facilitates phosphorylation of the scaffolding proteins LCP2 and LAT. This lead to the formation of a supramolecular signalosome that recruits the phospholipase PLCG1, resulting in calcium mobilization and ERK activation, ultimately leading to T cell expansion and differentiation into effector cells. Gamma-delta TRs are produced through somatic rearrangement of a limited repertoire of variable (V), diversity (D), and joining (J) genes. The potential diversity of gamma-delta TRs is conferred by the unique ability to rearrange (D) genes in tandem and to utilize all three reading frames. The combinatorial diversity is considerably increased by the sequence exonuclease trimming and random nucleotide (N) region additions which occur during the V-(D)-J rearrangements. The sequence is that of T cell receptor delta constant from Homo sapiens (Human).